A 728-amino-acid chain; its full sequence is Polyribonucleotide nucleotidyltransferase (728 aa).

D487 and D493 together coordinate Mg(2+). The region spanning 554-613 (PRIEVITVPTDKIREVIGTGGKVIREIVEKTGAKVDISDDGTIKVASSDGESIRKAIAWI) is the KH domain. The region spanning 623 to 691 (GKIYEGTVVK…DRGKVRLSMK (69 aa)) is the S1 motif domain. The span at 697–707 (TGEEIVYENEP) shows a compositional bias: acidic residues. A disordered region spans residues 697–728 (TGEEIVYENEPAEQPREKREGGGGRGRRRERD). Positions 709–718 (EQPREKREGG) are enriched in basic and acidic residues.

This sequence belongs to the polyribonucleotide nucleotidyltransferase family. The cofactor is Mg(2+).

The protein localises to the cytoplasm. It carries out the reaction RNA(n+1) + phosphate = RNA(n) + a ribonucleoside 5'-diphosphate. Functionally, involved in mRNA degradation. Catalyzes the phosphorolysis of single-stranded polyribonucleotides processively in the 3'- to 5'-direction. The sequence is that of Polyribonucleotide nucleotidyltransferase from Parvibaculum lavamentivorans (strain DS-1 / DSM 13023 / NCIMB 13966).